The following is a 548-amino-acid chain: Glucan endo-1,3-beta-glucosidase (548 aa).

The segment at residues 1-36 (MPHDRKNSSRRAWAALCAAVLAVSGALVGVAAPASA) is a signal peptide (tat-type signal). The segment at 37–430 (VPATIPLTIT…AGTGALRIGS (394 aa)) is possesses beta-glucanase activity, but is unable to lyse viable cells. The region spanning 38–396 (PATIPLTITN…PQAAYIKLDP (359 aa)) is the GH64 domain. Glutamate 153 acts as the Proton donor in catalysis. The active-site Proton acceptor is the aspartate 169. One can recognise a Ricin B-type lectin domain in the interval 422–548 (GTGALRIGST…NQTEAQRWTL (127 aa)). The interval 472–548 (GKCLDVARSG…NQTEAQRWTL (77 aa)) is essential for the lytic activity, but not for the beta-glucanase function.

This sequence belongs to the glycosyl hydrolase 64 family. Post-translationally, predicted to be exported by the Tat system. The position of the signal peptide cleavage has been experimentally proven.

The protein resides in the periplasm. The catalysed reaction is Hydrolysis of (1-&gt;3)-beta-D-glucosidic linkages in (1-&gt;3)-beta-D-glucans.. In terms of biological role, lysis of cellular walls containing beta-1,3-glucans. Implicated in the defense against fungal pathogens. The chain is Glucan endo-1,3-beta-glucosidase from Cellulosimicrobium cellulans (Arthrobacter luteus).